We begin with the raw amino-acid sequence, 419 residues long: G-protein coupled receptor 151 (419 aa).

Topologically, residues 1-41 (MLAAAFADSNSSSMNVSFAHLHFAGGYLPSDSQDWRTIIPA) are extracellular. Residues asparagine 10 and asparagine 15 are each glycosylated (N-linked (GlcNAc...) asparagine). Residues 42–62 (LLVAVCLVGFVGNLCVIGILL) traverse the membrane as a helical segment. Topologically, residues 63–71 (HNAWKGKPS) are cytoplasmic. The chain crosses the membrane as a helical span at residues 72–92 (MIHSLILNLSLADLSLLLFSA). Topologically, residues 93–116 (PIRATAYSKSVWDLGWFVCKSSDW) are extracellular. An intrachain disulfide couples cysteine 111 to cysteine 187. The helical transmembrane segment at 117-137 (FIHTCMAAKSLTIVVVAKVCF) threads the bilayer. Residues 138–153 (MYASDPAKQVSIHNYT) lie on the Cytoplasmic side of the membrane. The chain crosses the membrane as a helical span at residues 154–174 (IWSVLVAIWTVASLLPLPEWF). Residues 175-201 (FSTIRHHEGVEMCLVDVPAVAEEFMSM) lie on the Extracellular side of the membrane. A helical transmembrane segment spans residues 202–222 (FGKLYPLLAFGLPLFFASFYF). The Cytoplasmic segment spans residues 223-252 (WRAYDQCKKRGTKTQNLRNQIRSKQVTVML). A helical transmembrane segment spans residues 253-273 (LSIAIISALLWLPEWVAWLWV). The Extracellular portion of the chain corresponds to 274 to 286 (WHLKAAGPAPPQG). A helical membrane pass occupies residues 287-307 (FIALSQVLMFSISSANPLIFL). The Cytoplasmic segment spans residues 308-419 (VMSEEFREGL…EDQETGEGVK (112 aa)). A disordered region spans residues 330–419 (PTVSESQETP…EDQETGEGVK (90 aa)). Positions 332 to 341 (VSESQETPAG) are enriched in polar residues. Over residues 410–419 (EDQETGEGVK) the composition is skewed to acidic residues.

It belongs to the G-protein coupled receptor 1 family. High expression in the spinal cord.

The protein localises to the cell membrane. Proton-sensing G-protein coupled receptor. This Homo sapiens (Human) protein is G-protein coupled receptor 151 (GPR151).